The following is a 973-amino-acid chain: Protein HypA (973 aa).

This Clostridium perfringens (strain 13 / Type A) protein is Protein HypA (hypA).